We begin with the raw amino-acid sequence, 164 residues long: SsrA-binding protein (164 aa).

A disordered region spans residues 141 to 164 (KLHDKRQDEKQKSIKKEINSALKR). Residues 145-158 (KRQDEKQKSIKKEI) are compositionally biased toward basic and acidic residues.

It belongs to the SmpB family.

Its subcellular location is the cytoplasm. Functionally, required for rescue of stalled ribosomes mediated by trans-translation. Binds to transfer-messenger RNA (tmRNA), required for stable association of tmRNA with ribosomes. tmRNA and SmpB together mimic tRNA shape, replacing the anticodon stem-loop with SmpB. tmRNA is encoded by the ssrA gene; the 2 termini fold to resemble tRNA(Ala) and it encodes a 'tag peptide', a short internal open reading frame. During trans-translation Ala-aminoacylated tmRNA acts like a tRNA, entering the A-site of stalled ribosomes, displacing the stalled mRNA. The ribosome then switches to translate the ORF on the tmRNA; the nascent peptide is terminated with the 'tag peptide' encoded by the tmRNA and targeted for degradation. The ribosome is freed to recommence translation, which seems to be the essential function of trans-translation. The sequence is that of SsrA-binding protein from Prochlorococcus marinus (strain MIT 9301).